A 510-amino-acid polypeptide reads, in one-letter code: Monocarboxylate transporter 14 (510 aa).

Residues 1-27 (MYTSHEDIGYDFEDGPKDKKTLKPHPN) are Cytoplasmic-facing. 6 helical membrane passes run 28-48 (IDGG…ILIM), 74-94 (WVSS…GLFI), 103-123 (AIIG…AANV), 127-147 (FITF…PAVV), 159-179 (LAQG…TVLL), and 191-209 (AMLI…GALM). Positions 214-255 (PGKNPNDPGEKDVRGLPAHSTESVKSTGQQGRTEEKDGGLGN) are disordered. The span at 233–244 (STESVKSTGQQG) shows a compositional bias: polar residues. Helical transmembrane passes span 315 to 335 (MFVA…IPFI), 353 to 373 (FPLT…LGVI), 379 to 399 (ISVW…IFIL), 408 to 428 (LAVI…MPVV), 443 to 463 (GIII…AGWI), and 474 to 494 (FYIC…QPCI). At 495–510 (RIIEQSRRKYMDGAHV) the chain is on the cytoplasmic side.

The protein belongs to the major facilitator superfamily. Monocarboxylate porter (TC 2.A.1.13) family.

It is found in the cell membrane. Functionally, proton-linked monocarboxylate transporter. May catalyze the transport of monocarboxylates across the plasma membrane. In Homo sapiens (Human), this protein is Monocarboxylate transporter 14 (SLC16A14).